Here is a 1374-residue protein sequence, read N- to C-terminus: MTDESSDVPRELMESIKDVIGRKIKISVKKKVKLEVKGDRVENKVLVLTSCRAFLLSARIPSKLELTFSYLEIHGVICHKPAQMVVETEKCNMSMKMVSPEDVSEVLAHIGTCLRRIFPGLSPLRIMKKVSMEPSERLASLQALWDSQTLAEPGPCGGFSQMYACVCDWLGFSYKEEVQWDVDTIYLTQDTRELNLQDFSHLEHRDLIPIIAALEYNQWFTKLSSKDLKLSTDVCEQILRVVSRSNRLEELVLENAGLRIDFAQKLAGALAHNPNSGLHTINLAGNSLEDRGVSSLSIQFAKLPKGLKHLNLSKTSLSPKGVNSLCQSLSANPLTASTLTHLDLSGNALRGDDLSHMYNFLAQPNTIVHLDLSNTECSLEMVCSALLRGCLQCLAVLNLSRSVFSHRKGKEVPPSFKQFFSSSLALIQINLSGTKLSPEPLKALLLGLACNHSLKGVSLDLSNCELGHCLRSGGAQVLEGCIAEIHNITSLDISDNGLESDLSTLIVWLSKNRSIQHLALGKNFNNMKSKNLTPVLDNLVQMIQDEDSPLQSLSLADSKLKAEVTIIINALGSNTSLTKVDISGNGMGDMGAKMLAKALQINTKLRTVIWDKNNITAQGFQDIAVAMEKNYTLRFMPIPMYDAAQALKTNPEKTEEALQKIENYLLRNHETRKYLQEQAYRLQQGIVTSTTQQMIDRICVKVQDHLNSLRACGGDAIQEDLKAAERLMRDAKNSKTLLPNLYHVGGASWAGASGLSSSPIQETLESMAGEVTRVVDEQLKDLLESMVDAAETLCPNVMRKAHIRQDLIHASTEKISIPRTFVKNVLLEQSGIDILNKISEVKLTVASFLSDRIVDEILDSLSSSHRKLANHFSRLNKSLPQREDLEVELVEEKPVKRAILTVEDLTEVERLEDLDTCMMTPKSKRKSIHSRMLRPVSRAFEMEFDLDKALEEVPIHIEDPPFPSVRQEKRSSGLISELPSEEGRRLEHFTKLRPKRNKKQQPTQAAVCTISILPQDGEQNGLMGRVDEGVDEFFTKKVTKMDCKRSSSRSSDAHELGEGDEKKKRDSRRSGFLNLIKSRSRSERPPTVLMTEELSSPKGAMRSPPVDTTRKEIKAAEHNGAPDRTEEIKTPEPLEEGPAEEAGRAERSDSRGSPQGGRRYVQVMGSGLLAEMKAKQERRAACAQKKLGNDVISQDPSSPVSCNTERLEGGATVPKLQPGLPEARFGSGTPEKNAKAEPRVDGGCRSRSSSSMPTSPKPLLQSPKPSPSARPSIPQKPRTASRPEDTPDSPSGPSSPKVALLPPILKKVSSDKERDGQNSSQSSPRSFSQEASRRSWGPAQEYQEQKQRSSGKDGHQGSKCSDSGEEAEKEFIFV.

Met-1 is modified (N-acetylmethionine). A Phosphoserine modification is found at Ser-122. 10 LRR repeats span residues 245–269, 275–298, 304–327, 336–363, 391–418, 423–447, 485–510, 547–570, 574–597, and 658–682; these read SNRLEELVLENAGLRIDFAQKLAGA, NSGLHTINLAGNSLEDRGVSSLSI, PKGLKHLNLSKTSLSPKGVNSLCQ, ASTLTHLDLSGNALRGDDLSHMYNFLAQ, LQCLAVLNLSRSVFSHRKGKEVPPSFKQ, SLALIQINLSGTKLSPEPLKALLLG, IHNITSLDISDNGLESDLSTLIVWLS, DSPLQSLSLADSKLKAEVTIIINA, NTSLTKVDISGNGMGDMGAKMLAK, and LQKIENYLLRNHETRKYLQEQAYRL. Residues 714-738 adopt a coiled-coil conformation; that stretch reads GDAIQEDLKAAERLMRDAKNSKTLL. The residue at position 920 (Thr-920) is a Phosphothreonine. Disordered regions lie at residues 961-982 and 1040-1374; these read PFPSVRQEKRSSGLISELPSEE and KMDC…FIFV. An LRR 11 repeat occupies 962 to 985; sequence FPSVRQEKRSSGLISELPSEEGRR. The interval 962–1084 is inhibits capping activity of CP; sequence FPSVRQEKRS…LIKSRSRSER (123 aa). The residue at position 972 (Ser-972) is a Phosphoserine. Residues 1040–1064 show a composition bias toward basic and acidic residues; that stretch reads KMDCKRSSSRSSDAHELGEGDEKKK. Residues 1058-1092 are necessary for localization at the cell membrane; sequence EGDEKKKRDSRRSGFLNLIKSRSRSERPPTVLMTE. Position 1096 is a phosphoserine (Ser-1096). Basic and acidic residues-rich tracts occupy residues 1108–1132 and 1141–1150; these read TTRKEIKAAEHNGAPDRTEEIKTPE and EAGRAERSDS. The span at 1191 to 1204 shows a compositional bias: polar residues; that stretch reads VISQDPSSPVSCNT. At Thr-1229 the chain carries Phosphothreonine. Over residues 1232–1244 the composition is skewed to basic and acidic residues; sequence KNAKAEPRVDGGC. A compositionally biased stretch (low complexity) spans 1245 to 1263; the sequence is RSRSSSSMPTSPKPLLQSP. Phosphoserine occurs at positions 1281, 1289, 1291, 1295, 1319, 1328, and 1335. Over residues 1317–1330 the composition is skewed to low complexity; the sequence is QNSSQSSPRSFSQE. Positions 1343 to 1356 are enriched in basic and acidic residues; it reads QEQKQRSSGKDGHQ. Ser-1363 carries the post-translational modification Phosphoserine.

It belongs to the CARMIL family. In terms of assembly, homodimer. Interacts (via C-terminus) with heterodimeric capping protein (CP); this interaction uncaps barbed ends capped by CP, enhances barbed-end actin polymerization and promotes lamellipodial formation and cell migration. Interacts with MYO1E. Interacts with TRIO.

The protein localises to the cytoplasm. Its subcellular location is the cytoskeleton. It localises to the cell membrane. It is found in the cell projection. The protein resides in the lamellipodium. In terms of biological role, cell membrane-cytoskeleton-associated protein that plays a role in the regulation of actin polymerization at the barbed end of actin filaments. Prevents F-actin heterodimeric capping protein (CP) activity at the leading edges of migrating cells, and hence generates uncapped barbed ends and enhances actin polymerization, however, seems unable to nucleate filaments. Plays a role in lamellipodial protrusion formations and cell migration. This is F-actin-uncapping protein LRRC16A from Mus musculus (Mouse).